The following is a 535-amino-acid chain: Ribonuclease Y (535 aa).

The chain crosses the membrane as a helical span at residues 4 to 24 (IILAMVCALIGLIIGYVAISM). The disordered stretch occupies residues 107-145 (TDRASSLDRKDENLSNKEKMLDSKEQSLTDKSRHINERE). The 61-residue stretch at 225 to 285 (TITTVHLPDD…IRREIARMTL (61 aa)) folds into the KH domain. The HD domain maps to 351-444 (VLRHSVEVGK…VAAADALSSA (94 aa)).

The protein belongs to the RNase Y family.

It is found in the cell membrane. In terms of biological role, endoribonuclease that initiates mRNA decay. In Streptococcus agalactiae serotype Ia (strain ATCC 27591 / A909 / CDC SS700), this protein is Ribonuclease Y.